The following is a 223-amino-acid chain: Protein phosphatase 1 regulatory subunit 3C (223 aa).

The CBM21 domain occupies 104–209 (REQLTRKLVC…NNDGKNYSLH (106 aa)).

In terms of assembly, interacts with PPP1CC catalytic subunit of PP1 and associates with glycogen. Forms complexes with glycogen phosphorylase, glycogen synthase and phosphorylase kinase which is necessary for its regulation of PP1 activity.

Its function is as follows. Acts as a glycogen-targeting subunit for PP1 and regulates its activity. Activates glycogen synthase, reduces glycogen phosphorylase activity and limits glycogen breakdown. This Xenopus tropicalis (Western clawed frog) protein is Protein phosphatase 1 regulatory subunit 3C.